A 699-amino-acid polypeptide reads, in one-letter code: Ecdysone-inducible protein E75 (699 aa).

Residues 1–31 (MTLVMSPDSSYGRYDAPTPTDVTSPVHRERE) form a disordered region. The nuclear receptor DNA-binding region spans 42–118 (TVLCRVCGDK…VGMSRDAVRF (77 aa)). 2 NR C4-type zinc fingers span residues 45–65 (CRVC…CEGC) and 82–106 (CTKN…LKKC). The NR LBD domain maps to 152-399 (DAPRLLARVV…QQMWSEEEAV (248 aa)). Disordered stretches follow at residues 466-528 (TVTP…DDMP), 561-607 (RRDT…STHS), and 679-699 (LNLS…MLEA). Composition is skewed to basic and acidic residues over residues 510–520 (SLEEHNEDRRP) and 561–571 (RRDTGEAEART). A compositionally biased stretch (pro residues) spans 575–588 (TPSPQPQHPHPANP).

The protein belongs to the nuclear hormone receptor family. NR1 subfamily.

Its subcellular location is the nucleus. Implicated in the regulation of ecdysone-triggered gene hierarchies. Probably plays a key role in mediating the regulation of the larval molt by 20-OH-ecdysone. The sequence is that of Ecdysone-inducible protein E75 (E75) from Manduca sexta (Tobacco hawkmoth).